We begin with the raw amino-acid sequence, 185 residues long: uncharacterized protein (185 aa).

Residues 1 to 56 (MSSFTIPSPSSFSLSNSYNQTSPHSFTLRNSRSNFEFHRLRLDVESRRRSTSLRSN) constitute a chloroplast transit peptide. Positions 48-67 (RRSTSLRSNCSTKGTDSGEN) are disordered. The segment covering 52–64 (SLRSNCSTKGTDS) has biased composition (polar residues). Residues 105–138 (QAEQQKQVQEIQEEVLERAKKAKERAARETMEEQ) are a coiled coil.

The protein resides in the plastid. The protein localises to the chloroplast. It is found in the plastoglobule. This is an uncharacterized protein from Arabidopsis thaliana (Mouse-ear cress).